Reading from the N-terminus, the 173-residue chain is Large ribosomal subunit protein uL10 (173 aa).

Belongs to the universal ribosomal protein uL10 family. As to quaternary structure, part of the ribosomal stalk of the 50S ribosomal subunit. The N-terminus interacts with L11 and the large rRNA to form the base of the stalk. The C-terminus forms an elongated spine to which L12 dimers bind in a sequential fashion forming a multimeric L10(L12)X complex.

Its function is as follows. Forms part of the ribosomal stalk, playing a central role in the interaction of the ribosome with GTP-bound translation factors. This chain is Large ribosomal subunit protein uL10, found in Thiobacillus denitrificans (strain ATCC 25259 / T1).